Reading from the N-terminus, the 119-residue chain is Large ribosomal subunit protein bL19 (119 aa).

It belongs to the bacterial ribosomal protein bL19 family.

Functionally, this protein is located at the 30S-50S ribosomal subunit interface and may play a role in the structure and function of the aminoacyl-tRNA binding site. The sequence is that of Large ribosomal subunit protein bL19 from Pediococcus pentosaceus (strain ATCC 25745 / CCUG 21536 / LMG 10740 / 183-1w).